Consider the following 349-residue polypeptide: Transcription factor HBP-1a (349 aa).

Residues 1–11 (MGSNDPSTPSK) show a composition bias toward polar residues. Disordered stretches follow at residues 1-39 (MGSNDPSTPSKASKPPEQEQPPATTSGTTAPVYPEWPGF), 101-196 (FHYP…NKPM), 224-277 (GATG…QAEC), and 312-349 (NTSLKAKLGESGGGGGSDAVPDMNERGDTNGGSHQKEP). The span at 113–124 (PAGAQGAAPGAA) shows a compositional bias: low complexity. The span at 174 to 191 (NENGSAQNGVSHSSSHGT) shows a compositional bias: polar residues. The 64-residue stretch at 252–315 (ELKKQKRKLS…EELLSKNTSL (64 aa)) folds into the bZIP domain. The interval 254-273 (KKQKRKLSNRESARRSRLRK) is basic motif. The segment covering 261–277 (SNRESARRSRLRKQAEC) has biased composition (basic and acidic residues). A leucine-zipper region spans residues 280 to 315 (LGQRAEALKSENSSLRIELDRIKKEYEELLSKNTSL). The segment covering 334 to 349 (MNERGDTNGGSHQKEP) has biased composition (basic and acidic residues).

It belongs to the bZIP family. As to quaternary structure, binds DNA as a dimer.

The protein localises to the nucleus. Its function is as follows. Binds to the hexamer motif 5'-ACGTCA-3' of histone gene promoters. The chain is Transcription factor HBP-1a from Triticum aestivum (Wheat).